Reading from the N-terminus, the 478-residue chain is 7-dehydrocholesterol reductase (478 aa).

The segment at Met1–Glu28 is disordered. The next 6 membrane-spanning stretches (helical) occupy residues Leu43 to Ala63, Trp97 to Val117, Trp180 to Ile200, Val269 to Trp289, Leu309 to Val329, and Ile333 to Ile353. NADP(+)-binding positions include Lys361, Arg365, Met398, Trp403, and Asn410–Tyr411. A helical membrane pass occupies residues Ala424–Val444. Residues Asp450, Cys454–Tyr458, and Tyr465 each bind NADP(+).

It belongs to the ERG4/ERG24 family.

The protein resides in the endoplasmic reticulum membrane. The enzyme catalyses cholesterol + NADP(+) = 7-dehydrocholesterol + NADPH + H(+). The catalysed reaction is 7-dehydrodesmosterol + NADPH + H(+) = desmosterol + NADP(+). It participates in steroid biosynthesis; cholesterol biosynthesis. In terms of biological role, catalyzes the last step of the cholesterol synthesis pathway, which transforms cholesta-5,7-dien-3beta-ol (7-dehydrocholesterol,7-DHC) into cholesterol by reducing the C7-C8 double bond of its sterol core. Can also metabolize cholesta-5,7,24-trien-3beta-ol (7-dehydrodemosterol, 7-DHD) to desmosterol, which is then metabolized by the Delta(24)-sterol reductase (DHCR24) to cholesterol. Modulates ferroptosis (a form of regulated cell death driven by iron-dependent lipid peroxidation) through the metabolic breakdown of the anti-ferroptotic metabolites 7-DHC and 7-DHD which, when accumulated, divert the propagation of peroxyl radical-mediated damage from phospholipid components to its sterol core, protecting plasma and mitochondrial membranes from phospholipid autoxidation. The protein is 7-dehydrocholesterol reductase (dhcr7) of Danio rerio (Zebrafish).